The chain runs to 385 residues: Sulfoquinovose monooxygenase (385 aa).

The segment at 366-385 is disordered; sequence AYGRVPSETPATPLGNGERH.

The protein belongs to the SsuD family. As to quaternary structure, homodimer.

The enzyme catalyses 6-sulfo-D-quinovose + FMNH2 + O2 = 6-dehydro-D-glucose + FMN + sulfite + H2O + 2 H(+). Part of the sulfoquinovose monooxygenase (sulfo-SMO) pathway, a D-sulfoquinovose degradation pathway that enables the complete utilization of all carbons within sulfoquinovose (SQ) with concomitant production of inorganic sulfite. Catalyzes the oxidative desulfurization of sulfoquinovose to sulfite and 6-dehydro-D-glucose. Is highly specific for sulfoquinovose and cannot use sulfoquinovosyl glycerol. FMNH(2) is provided by the FMN reductase SmoA. This Agrobacterium fabrum (strain C58 / ATCC 33970) (Agrobacterium tumefaciens (strain C58)) protein is Sulfoquinovose monooxygenase.